We begin with the raw amino-acid sequence, 645 residues long: MAEIHELSEILADQIAAGEVVERPASVVKELVENAIDAGSSRIDILLEESGLKMIRIIDNGSGIDANQVEIAFKRHATSKISSRSDLFKVGTLGFRGEALPSIASIADVEMLTATTDGPGKKIHYRGGKLEDSGDAQSRQGTDITVQDLFFNTPARLKYLKSLQTELSKITDIVNRIALSYPEVAISLQNNERELMRTSGNGNIQQVLANIYGAKNAQKMVHVKEQNIDFTIDGYISLPEFTRANRSYITVLVNGRYIKNFQISKAIIDGYGSKLMVGRYPVAVLNIKTDPILVDVNVHPTKQEVRISEEQTLLDLISKAVFNELADKNLIPDAVDNLKKSRVKVSSSEQLDLARMAISGSFEMEQDHVTIPDTDNDEVEKEVNISDRYVEPEPIVINSRQDLKSDTIAEFKTKYANDAVVNNTVEDGDQPELKEKDAVQRFPTLTYIGQMHGTYLFAEAEDGLYIIDQHAAQERINYEYYRVQIGEVSDDQQDLLVPIYLDYSTTDAIRIKEKQTVLESCGLFLEEFGKNTFIVRHHPTWFKKGQEEDTVKEMVDYVLNDSSMTVAKFREATAIMMSCKRAIKANHHLDEPQAKQLLKDIAKAENPFNCPHGRPVLVHFSTTDMEKMFKRIQDPHHSDLMEDEM.

Belongs to the DNA mismatch repair MutL/HexB family.

This protein is involved in the repair of mismatches in DNA. It is required for dam-dependent methyl-directed DNA mismatch repair. May act as a 'molecular matchmaker', a protein that promotes the formation of a stable complex between two or more DNA-binding proteins in an ATP-dependent manner without itself being part of a final effector complex. This chain is DNA mismatch repair protein MutL, found in Pediococcus pentosaceus (strain ATCC 25745 / CCUG 21536 / LMG 10740 / 183-1w).